Here is a 243-residue protein sequence, read N- to C-terminus: Carboxy-S-adenosyl-L-methionine synthase (243 aa).

S-adenosyl-L-methionine is bound by residues Y40, 65-67 (GSS), 90-91 (DN), 118-119 (DI), N133, and R200.

This sequence belongs to the class I-like SAM-binding methyltransferase superfamily. Cx-SAM synthase family. As to quaternary structure, homodimer.

It catalyses the reaction prephenate + S-adenosyl-L-methionine = carboxy-S-adenosyl-L-methionine + 3-phenylpyruvate + H2O. In terms of biological role, catalyzes the conversion of S-adenosyl-L-methionine (SAM) to carboxy-S-adenosyl-L-methionine (Cx-SAM). The sequence is that of Carboxy-S-adenosyl-L-methionine synthase from Shewanella denitrificans (strain OS217 / ATCC BAA-1090 / DSM 15013).